Here is a 235-residue protein sequence, read N- to C-terminus: Octanoyltransferase (235 aa).

In terms of domain architecture, BPL/LPL catalytic spans 44–231; the sequence is DTTADELWLV…HQVGLPNENN (188 aa). Substrate-binding positions include 83–90, 150–152, and 163–165; these read RGGQVTYH, SLG, and GLA. Catalysis depends on C181, which acts as the Acyl-thioester intermediate.

It belongs to the LipB family.

The protein resides in the cytoplasm. The enzyme catalyses octanoyl-[ACP] + L-lysyl-[protein] = N(6)-octanoyl-L-lysyl-[protein] + holo-[ACP] + H(+). It participates in protein modification; protein lipoylation via endogenous pathway; protein N(6)-(lipoyl)lysine from octanoyl-[acyl-carrier-protein]: step 1/2. Its function is as follows. Catalyzes the transfer of endogenously produced octanoic acid from octanoyl-acyl-carrier-protein onto the lipoyl domains of lipoate-dependent enzymes. Lipoyl-ACP can also act as a substrate although octanoyl-ACP is likely to be the physiological substrate. In Colwellia psychrerythraea (strain 34H / ATCC BAA-681) (Vibrio psychroerythus), this protein is Octanoyltransferase.